We begin with the raw amino-acid sequence, 223 residues long: Urease accessory protein UreF (223 aa).

This sequence belongs to the UreF family. In terms of assembly, ureD, UreF and UreG form a complex that acts as a GTP-hydrolysis-dependent molecular chaperone, activating the urease apoprotein by helping to assemble the nickel containing metallocenter of UreC. The UreE protein probably delivers the nickel.

The protein resides in the cytoplasm. Its function is as follows. Required for maturation of urease via the functional incorporation of the urease nickel metallocenter. The polypeptide is Urease accessory protein UreF (Rhizobium leguminosarum bv. viciae).